We begin with the raw amino-acid sequence, 434 residues long: Methylenetetrahydrofolate--tRNA-(uracil-5-)-methyltransferase TrmFO (434 aa).

FAD is bound at residue 10–15 (GAGLAG).

It belongs to the MnmG family. TrmFO subfamily. Requires FAD as cofactor.

The protein resides in the cytoplasm. It catalyses the reaction uridine(54) in tRNA + (6R)-5,10-methylene-5,6,7,8-tetrahydrofolate + NADH + H(+) = 5-methyluridine(54) in tRNA + (6S)-5,6,7,8-tetrahydrofolate + NAD(+). The catalysed reaction is uridine(54) in tRNA + (6R)-5,10-methylene-5,6,7,8-tetrahydrofolate + NADPH + H(+) = 5-methyluridine(54) in tRNA + (6S)-5,6,7,8-tetrahydrofolate + NADP(+). Functionally, catalyzes the folate-dependent formation of 5-methyl-uridine at position 54 (M-5-U54) in all tRNAs. The polypeptide is Methylenetetrahydrofolate--tRNA-(uracil-5-)-methyltransferase TrmFO (Bacillus mycoides (strain KBAB4) (Bacillus weihenstephanensis)).